A 694-amino-acid chain; its full sequence is Ubiquitin-like modifier-activating enzyme ATG7 (694 aa).

A GXGXXG motif motif is present at residues 370–375; that stretch reads GAGTLG. C550 functions as the Glycyl thioester intermediate in the catalytic mechanism. The tract at residues 650–689 is homodimerization; sequence ALQEKEYVAELSGLAEVQRRAEEMAAHVDWEEDDDLVDDG.

It belongs to the ATG7 family. As to quaternary structure, homodimer. Interacts with ATG8 through a thioester bond between Cys-550 and the C-terminal 'Gly-116' of ATG8 and with ATG12 through a thioester bond between Cys-550 and the C-terminal 'Gly-160' of ATG12. Also interacts with ATG3.

It localises to the cytoplasm. It is found in the preautophagosomal structure. In terms of biological role, E1-like activating enzyme involved in the 2 ubiquitin-like systems required for cytoplasm to vacuole transport (Cvt) and autophagy. Activates ATG12 for its conjugation with ATG5 and ATG8 for its conjugation with phosphatidylethanolamine. Both systems are needed for the ATG8 association to Cvt vesicles and autophagosomes membranes. Autophagy is essential for maintenance of amino acid levels and protein synthesis under nitrogen starvation. Required for selective autophagic degradation of the nucleus (nucleophagy) as well as for mitophagy which contributes to regulate mitochondrial quantity and quality by eliminating the mitochondria to a basal level to fulfill cellular energy requirements and preventing excess ROS production. Autophagy is required for proper vegetative growth, asexual/sexual reproduction, and full virulence. Autophagy is particularly involved in the biosynthesis of deoxynivalenol (DON), an important virulence determinant. This is Ubiquitin-like modifier-activating enzyme ATG7 from Gibberella zeae (strain ATCC MYA-4620 / CBS 123657 / FGSC 9075 / NRRL 31084 / PH-1) (Wheat head blight fungus).